The sequence spans 192 residues: ADP-ribosylation factor-like protein 4C (192 aa).

Residue Gly2 is the site of N-myristoyl glycine attachment. GTP-binding positions include 20–27, 68–72, and 127–130; these read GLDSAGKT, DVGGQ, and NKQD.

The protein belongs to the small GTPase superfamily. Arf family. As to quaternary structure, interacts with CYTH2. Interacts with alpha tubulin; interaction is independent on the ARL4C GTP or GDP binding status. Expressed in several tumor cell lines (at protein level). Expressed in lung, brain, leukocytes and placenta.

The protein localises to the cell projection. Its subcellular location is the filopodium. The protein resides in the cell membrane. It is found in the cytoplasm. Small GTP-binding protein which cycles between an inactive GDP-bound and an active GTP-bound form, and the rate of cycling is regulated by guanine nucleotide exchange factors (GEF) and GTPase-activating proteins (GAP). GTP-binding protein that does not act as an allosteric activator of the cholera toxin catalytic subunit. May be involved in transport between a perinuclear compartment and the plasma membrane, apparently linked to the ABCA1-mediated cholesterol secretion pathway. Recruits CYTH1, CYTH2, CYTH3 and CYTH4 to the plasma membrane in the GDP-bound form. Regulates the microtubule-dependent intracellular vesicular transport from early endosome to recycling endosome process. The protein is ADP-ribosylation factor-like protein 4C (ARL4C) of Homo sapiens (Human).